A 539-amino-acid chain; its full sequence is O-phosphoserine--tRNA(Cys) ligase (539 aa).

Substrate is bound by residues 188–190 (HMT), 233–235 (SAS), 275–276 (YY), and N319.

The protein belongs to the class-II aminoacyl-tRNA synthetase family. O-phosphoseryl-tRNA(Cys) synthetase subfamily. Homotetramer. Interacts with SepCysS.

The catalysed reaction is tRNA(Cys) + O-phospho-L-serine + ATP = O-phospho-L-seryl-tRNA(Cys) + AMP + diphosphate. Its function is as follows. Catalyzes the attachment of O-phosphoserine (Sep) to tRNA(Cys). This is O-phosphoserine--tRNA(Cys) ligase (sepS) from Methanocaldococcus jannaschii (strain ATCC 43067 / DSM 2661 / JAL-1 / JCM 10045 / NBRC 100440) (Methanococcus jannaschii).